The chain runs to 347 residues: S-adenosylmethionine:tRNA ribosyltransferase-isomerase (347 aa).

It belongs to the QueA family. As to quaternary structure, monomer.

The protein localises to the cytoplasm. It carries out the reaction 7-aminomethyl-7-carbaguanosine(34) in tRNA + S-adenosyl-L-methionine = epoxyqueuosine(34) in tRNA + adenine + L-methionine + 2 H(+). Its pathway is tRNA modification; tRNA-queuosine biosynthesis. Its function is as follows. Transfers and isomerizes the ribose moiety from AdoMet to the 7-aminomethyl group of 7-deazaguanine (preQ1-tRNA) to give epoxyqueuosine (oQ-tRNA). The protein is S-adenosylmethionine:tRNA ribosyltransferase-isomerase of Xylella fastidiosa (strain 9a5c).